The primary structure comprises 513 residues: ATP synthase subunit alpha 2 (513 aa).

ATP is bound at residue 169–176 (GDRQTGKT).

It belongs to the ATPase alpha/beta chains family. As to quaternary structure, F-type ATPases have 2 components, CF(1) - the catalytic core - and CF(0) - the membrane proton channel. CF(1) has five subunits: alpha(3), beta(3), gamma(1), delta(1), epsilon(1). CF(0) has three main subunits: a(1), b(2) and c(9-12). The alpha and beta chains form an alternating ring which encloses part of the gamma chain. CF(1) is attached to CF(0) by a central stalk formed by the gamma and epsilon chains, while a peripheral stalk is formed by the delta and b chains.

It is found in the cell inner membrane. The catalysed reaction is ATP + H2O + 4 H(+)(in) = ADP + phosphate + 5 H(+)(out). Produces ATP from ADP in the presence of a proton gradient across the membrane. The alpha chain is a regulatory subunit. This chain is ATP synthase subunit alpha 2, found in Shewanella frigidimarina (strain NCIMB 400).